The chain runs to 232 residues: 2,3,4,5-tetrahydropyridine-2,6-dicarboxylate N-acetyltransferase (232 aa).

This sequence belongs to the transferase hexapeptide repeat family. DapH subfamily.

It catalyses the reaction (S)-2,3,4,5-tetrahydrodipicolinate + acetyl-CoA + H2O = L-2-acetamido-6-oxoheptanedioate + CoA. It functions in the pathway amino-acid biosynthesis; L-lysine biosynthesis via DAP pathway; LL-2,6-diaminopimelate from (S)-tetrahydrodipicolinate (acetylase route): step 1/3. Catalyzes the transfer of an acetyl group from acetyl-CoA to tetrahydrodipicolinate. The chain is 2,3,4,5-tetrahydropyridine-2,6-dicarboxylate N-acetyltransferase from Streptococcus gordonii (strain Challis / ATCC 35105 / BCRC 15272 / CH1 / DL1 / V288).